Here is a 1191-residue protein sequence, read N- to C-terminus: Protogenin (1191 aa).

Residues 1-23 (MAPPVRPGMLPLLLLLLLPPLGS) form the signal peptide. 4 Ig-like domains span residues 24–124 (VPGV…AHLT), 126–216 (STIS…ASLT), 229–316 (PTII…ATLT), and 321–405 (PSFV…ARLT). The Extracellular segment spans residues 24–943 (VPGVWSFSEL…YYHLDQKSMT (920 aa)). Intrachain disulfides connect cysteine 54–cysteine 107 and cysteine 150–cysteine 199. Asparagine 237 carries N-linked (GlcNAc...) asparagine glycosylation. Cystine bridges form between cysteine 250–cysteine 298 and cysteine 342–cysteine 389. 5 consecutive Fibronectin type-III domains span residues 415-509 (APYN…TLED), 511-607 (PLRP…TPKA), 612-711 (APKS…VRDR), 718-811 (PPHH…TLPE), and 816-911 (PPVG…VLPK). An N-linked (GlcNAc...) asparagine glycan is attached at asparagine 624. A helical membrane pass occupies residues 944–964 (GIAVGVGIALTCILICVLILI). The Cytoplasmic portion of the chain corresponds to 965-1191 (YRSKARKSSA…LRYAAEGFPV (227 aa)). Disordered stretches follow at residues 975–1010 (SKTA…ETAE) and 1079–1191 (ISDE…GFPV). Polar residues predominate over residues 977–990 (TAQSGTQPLSQASA). Positions 1104-1132 (DTEHSANSEGSHETGDSGRFSHESNDEIH) are enriched in basic and acidic residues. Polar residues-rich tracts occupy residues 1135–1146 (SVISSTPPTSNP) and 1171–1180 (EQTSAPQTSA).

It belongs to the immunoglobulin superfamily. DCC family. From mid-gastrulation to early somite stages, restricted to posterior neural plate and mesoderm with an anterior limit at the level of the rhombencephalon. Posterior restriction is progressively lost during somitogenesis. Expression is maintained in the neural tube and paraxial mesoderm during this process. As development proceeds, further restricted to the dorsal parts of the spinal cord and somites. In parallel, expression progresses caudally during axis elongation.

The protein localises to the membrane. Functionally, may play a role in anteroposterior axis elongation. The polypeptide is Protogenin (Mus musculus (Mouse)).